The primary structure comprises 609 residues: ATP-dependent lipid A-core flippase (609 aa).

Helical transmembrane passes span 47–67 (LLAA…IYLI), 88–108 (ILML…VGSF), 167–187 (AIIT…VMFV), 190–210 (WQLS…ISII), 279–299 (VIQI…AIFG), and 305–325 (GSSW…AAIL). Residues 47–340 (LLAAIGSIFF…LTKVNVVIQK (294 aa)) enclose the ABC transmembrane type-1 domain. In terms of domain architecture, ABC transporter spans 372–606 (VTIKDLSFAF…GGLYTRLYQS (235 aa)). 404–411 (GKSGSGKT) provides a ligand contact to ATP.

Belongs to the ABC transporter superfamily. Lipid exporter (TC 3.A.1.106) family. Homodimer.

It localises to the cell inner membrane. It carries out the reaction ATP + H2O + lipid A-core oligosaccharideSide 1 = ADP + phosphate + lipid A-core oligosaccharideSide 2.. Its function is as follows. Involved in lipopolysaccharide (LPS) biosynthesis. Translocates lipid A-core from the inner to the outer leaflet of the inner membrane. Transmembrane domains (TMD) form a pore in the inner membrane and the ATP-binding domain (NBD) is responsible for energy generation. The protein is ATP-dependent lipid A-core flippase of Francisella tularensis subsp. tularensis (strain FSC 198).